We begin with the raw amino-acid sequence, 1310 residues long: Multidrug resistance protein 4 (1310 aa).

5 consecutive transmembrane segments (helical) span residues 48–68, 125–145, 196–216, 223–243, and 299–319; these read WLDL…GVLT, MVCF…CFFV, KFGI…IGFA, LVIM…AVFA, and GLTV…AFSL. The region spanning 55–368 is the ABC transmembrane type-1 1 domain; that stretch reads AVGIFGSIGC…IAIPLNIFAT (314 aa). Asn-336 is a glycosylation site (N-linked (GlcNAc...) asparagine). Residues 342–362 traverse the membrane as a helical segment; the sequence is VMIVFICVLIATQGLSIIAIP. Asn-402 is a glycosylation site (N-linked (GlcNAc...) asparagine). Residues 403 to 642 form the ABC transporter 1 domain; sequence ITLEDVQFRY…KGTYYGLVKR (240 aa). 438-445 serves as a coordination point for ATP; it reads GASGCGKS. The N-linked (GlcNAc...) asparagine glycan is linked to Asn-608. 2 helical membrane-spanning segments follow: residues 721–741 and 773–793; these read WFLS…FPFF and IIVV…IGLF. Residues 722 to 1030 form the ABC transmembrane type-1 2 domain; it reads FLSTFGFIGG…LGNIVPDIGK (309 aa). Asn-816 is a glycosylation site (N-linked (GlcNAc...) asparagine). The next 3 membrane-spanning stretches (helical) occupy residues 849–869, 871–891, and 945–965; these read VGNV…AFYY, WKVS…VFIN, and IGIY…TLLT. Residues 1065-1304 enclose the ABC transporter 2 domain; that stretch reads IEFKDICFRY…KGFYYTLAMQ (240 aa). ATP is bound at residue 1100-1107; it reads GASGCGKS.

The protein belongs to the ABC transporter superfamily. ABCB family. Multidrug resistance exporter (TC 3.A.1.201) subfamily.

It is found in the membrane. The enzyme catalyses ATP + H2O + xenobioticSide 1 = ADP + phosphate + xenobioticSide 2.. Its function is as follows. Energy-dependent efflux pump responsible for decreased drug accumulation in multidrug resistance parasites. The chain is Multidrug resistance protein 4 from Entamoeba histolytica (strain ATCC 30459 / HM-1:IMSS / ABRM).